The chain runs to 638 residues: Ubiquitin-associated and SH3 domain-containing protein B (638 aa).

At S9 the chain carries Phosphoserine. The residue at position 12 (T12) is a Phosphothreonine. The region spanning 23 to 65 is the UBA domain; the sequence is TVKHGSALDVLLSMGFPRARAQKALASTGGRSVQAACDWLFSH. Residues 243 to 308 enclose the SH3 domain; the sequence is ANHETLQVIY…PENYITKADE (66 aa). The segment at 369-638 is protein tyrosine phosphatase; that stretch reads GPQKRCLFVC…FNWRETLLQE (270 aa). The active site involves R379. H380 acts as the Tele-phosphohistidine intermediate in catalysis. H565 is an active-site residue.

Homodimer. Interacts with JAK2 (in vitro). Interacts with CBL. Part of a complex containing CBL and activated EGFR. Interacts with ubiquitin and with mono-ubiquitinated proteins. Interacts with ZAP70 (ubiquitinated form). In terms of tissue distribution, detected in splenic T-cells and B-cells, total spleen, skeletal muscle, heart, lung, kidney, thymus, brain and liver (at protein level). Highly expressed in brain. Detected in heart, spleen, lung, liver, kidney and testis.

It localises to the cytoplasm. Its subcellular location is the nucleus. It carries out the reaction O-phospho-L-tyrosyl-[protein] + H2O = L-tyrosyl-[protein] + phosphate. Functionally, interferes with CBL-mediated down-regulation and degradation of receptor-type tyrosine kinases. Promotes accumulation of activated target receptors, such as T-cell receptors and EGFR, on the cell surface. Exhibits tyrosine phosphatase activity toward several substrates including EGFR, FAK, SYK, and ZAP70. Down-regulates proteins that are dually modified by both protein tyrosine phosphorylation and ubiquitination. The polypeptide is Ubiquitin-associated and SH3 domain-containing protein B (Ubash3b) (Mus musculus (Mouse)).